Reading from the N-terminus, the 55-residue chain is ATP synthase F(0) complex subunit 8 (55 aa).

Residues 4–24 (LNPAPWFTILVFSWMIFLAII) traverse the membrane as a helical segment. The segment covering 32 to 41 (TSPNDSSPLS) has biased composition (polar residues). Residues 32-55 (TSPNDSSPLSTEKHKTESWDWPWQ) are disordered.

The protein belongs to the ATPase protein 8 family. In terms of assembly, component of the ATP synthase complex composed at least of ATP5F1A/subunit alpha, ATP5F1B/subunit beta, ATP5MC1/subunit c (homooctomer), MT-ATP6/subunit a, MT-ATP8/subunit 8, ATP5ME/subunit e, ATP5MF/subunit f, ATP5MG/subunit g, ATP5MK/subunit k, ATP5MJ/subunit j, ATP5F1C/subunit gamma, ATP5F1D/subunit delta, ATP5F1E/subunit epsilon, ATP5PF/subunit F6, ATP5PB/subunit b, ATP5PD/subunit d, ATP5PO/subunit OSCP. ATP synthase complex consists of a soluble F(1) head domain (subunits alpha(3) and beta(3)) - the catalytic core - and a membrane F(0) domain - the membrane proton channel (subunits c, a, 8, e, f, g, k and j). These two domains are linked by a central stalk (subunits gamma, delta, and epsilon) rotating inside the F1 region and a stationary peripheral stalk (subunits F6, b, d, and OSCP).

The protein localises to the mitochondrion membrane. Its function is as follows. Subunit 8, of the mitochondrial membrane ATP synthase complex (F(1)F(0) ATP synthase or Complex V) that produces ATP from ADP in the presence of a proton gradient across the membrane which is generated by electron transport complexes of the respiratory chain. ATP synthase complex consist of a soluble F(1) head domain - the catalytic core - and a membrane F(1) domain - the membrane proton channel. These two domains are linked by a central stalk rotating inside the F(1) region and a stationary peripheral stalk. During catalysis, ATP synthesis in the catalytic domain of F(1) is coupled via a rotary mechanism of the central stalk subunits to proton translocation. In vivo, can only synthesize ATP although its ATP hydrolase activity can be activated artificially in vitro. Part of the complex F(0) domain. The sequence is that of ATP synthase F(0) complex subunit 8 from Formosania lacustris (Oriental stream loach).